The primary structure comprises 324 residues: uncharacterized protein (324 aa).

An HTH lysR-type domain is found at 1–58 (MDIKVMEYAAEIARRQSFTKAAEHLHIAQPSLSQQIKKLEAELGLTLFHRSHGSVTLT). The H-T-H motif DNA-binding region spans 18–37 (FTKAAEHLHIAQPSLSQQIK).

This sequence belongs to the LysR transcriptional regulatory family.

This is an uncharacterized protein from Bacillus subtilis (strain 168).